The following is a 392-amino-acid chain: 8-amino-7-oxononanoate synthase 1 (392 aa).

109-110 (GF) provides a ligand contact to pyridoxal 5'-phosphate. His134 is a substrate binding site. Pyridoxal 5'-phosphate is bound by residues Ser181, 206-209 (DDAH), and 237-240 (TLSK). The residue at position 240 (Lys240) is an N6-(pyridoxal phosphate)lysine. Thr354 serves as a coordination point for substrate.

It belongs to the class-II pyridoxal-phosphate-dependent aminotransferase family. BioF subfamily. In terms of assembly, homodimer. Pyridoxal 5'-phosphate is required as a cofactor.

It catalyses the reaction 6-carboxyhexanoyl-[ACP] + L-alanine + H(+) = (8S)-8-amino-7-oxononanoate + holo-[ACP] + CO2. It participates in cofactor biosynthesis; biotin biosynthesis. Functionally, catalyzes the decarboxylative condensation of pimeloyl-[acyl-carrier protein] and L-alanine to produce 8-amino-7-oxononanoate (AON), [acyl-carrier protein], and carbon dioxide. The polypeptide is 8-amino-7-oxononanoate synthase 1 (kbl) (Bacillus subtilis (strain 168)).